We begin with the raw amino-acid sequence, 217 residues long: Large ribosomal subunit protein uL3 (217 aa).

Gln152 bears the N5-methylglutamine mark.

It belongs to the universal ribosomal protein uL3 family. Part of the 50S ribosomal subunit. Forms a cluster with proteins L14 and L19. Post-translationally, methylated by PrmB.

In terms of biological role, one of the primary rRNA binding proteins, it binds directly near the 3'-end of the 23S rRNA, where it nucleates assembly of the 50S subunit. The chain is Large ribosomal subunit protein uL3 from Blochmanniella pennsylvanica (strain BPEN).